The sequence spans 243 residues: Asnovolin H synthase nvfL (243 aa).

The next 7 helical transmembrane spans lie at 20-42 (ANTL…AYYS), 51-71 (ALIP…IHCP), 75-95 (FVRI…YAAI), 112-132 (LPFI…ALAA), 138-160 (IAFV…SQLL), 169-189 (SYVV…MVTI), and 205-225 (LLLW…FCFY).

This sequence belongs to the paxB family.

It is found in the membrane. It carries out the reaction (3R)-[(10S)-11-epoxyfarnesyl]-2,3,5-trimethyl-6-oxido-4-oxocyclohexa-1,5-diene-1-carboxylate + H(+) = asnovolin H. The protein operates within secondary metabolite biosynthesis; terpenoid biosynthesis. Functionally, terpene cyclase; part of the gene cluster that mediates the biosynthesis of novofumigatonin, a heavily oxygenated meroterpenoid containing a unique orthoester moiety. The first step of the pathway is the synthesis of 3,5-dimethylorsellinic acid (DMOA) by the polyketide synthase nvfA via condensation of one acetyl-CoA starter unit with 3 malonyl-CoA units and 2 methylations. DMOA is then converted to farnesyl-DMOA by the farnesyltransferase nvfB. Epoxydation by FAD-dependent monooxygenase nvfK, followed by a protonation-initiated cyclization catalyzed by the terpene cyclase nvfL leads to the production of asnavolin H. The short chain dehydrogenase nvfC then as a 3-OH dehydrogenase of asnovolin H to yield chemesin D. There are two branches to synthesize asnovolin A from chemesin D. In one branch, chemesin D undergoes Baeyer-Villiger oxidation by nvfH, methylation by nvfJ, and enoyl reduction by the nvfM D enoylreductase that reduces the double bond between C-5'and C-6', to form respectively asnovolin I, asnovolin K, and asnovolin A. In the other branch, the methylation precedes the Baeyer-Villiger oxidation and the enoyl reduction to yield asnovolin A via the asnovolin J intermediate. Asnovolin A is further converted to fumigatonoid A by the Fe(II)/2-oxoglutarate-dependent dioxygenase nvfI that catalyzes an endoperoxidation reaction. The alpha/beta hydrolase nvfD then acts as an epimerase that converts fumigatonoid A to its C-5' epimer, which then undergoes spontaneous or nvfD-catalyzed lactonization. The following step utilizes the ketoreductase nvfG to produce fumigatonoid B. The dioxygenase nvfE further converts fumigatonoid B into fumigatonoid C. Finally the Fe(II)/2-oxoglutarate-dependent dioxygenase nvfF catalyzes two rounds of oxidation to transform fumigatonoid C into the end product, novofumigatonin A. In Aspergillus novofumigatus (strain IBT 16806), this protein is Asnovolin H synthase nvfL.